Here is a 367-residue protein sequence, read N- to C-terminus: Serine/threonine-protein kinase Sgk2 (367 aa).

The tract at residues 1-28 (MASSPVGVPSPQPSRANGNINLGPSANP) is disordered. The residue at position 10 (serine 10) is a Phosphoserine. The span at 15 to 28 (RANGNINLGPSANP) shows a compositional bias: polar residues. Positions 35 to 292 (FDFLKVIGKG…FLDIKNHMFF (258 aa)) constitute a Protein kinase domain. Residues 41–49 (IGKGNYGKV) and lysine 64 contribute to the ATP site. The Nuclear localization signal signature appears at 68 to 77 (KKSILKNKEQ). Catalysis depends on aspartate 159, which acts as the Proton acceptor. The residue at position 193 (threonine 193) is a Phosphothreonine; by PDPK1. Residues 293-367 (SPINWDDLYH…AQDDDDILDS (75 aa)) form the AGC-kinase C-terminal domain. Phosphoserine is present on residues serine 334 and serine 356. Tyrosine 357 carries the phosphotyrosine modification.

The protein belongs to the protein kinase superfamily. AGC Ser/Thr protein kinase family. Activated by phosphorylation on Ser-356 by an unknown kinase (may be mTORC2 but not confirmed), transforming it into a substrate for PDPK1 which then phosphorylates it on Thr-193. Expressed in the proximal tubule and thick ascending limb of the loop of Henle (TALH).

It is found in the cytoplasm. The protein localises to the nucleus. The catalysed reaction is L-seryl-[protein] + ATP = O-phospho-L-seryl-[protein] + ADP + H(+). The enzyme catalyses L-threonyl-[protein] + ATP = O-phospho-L-threonyl-[protein] + ADP + H(+). With respect to regulation, two specific sites, one in the kinase domain (Thr-193) and the other in the C-terminal regulatory region (Ser-356), need to be phosphorylated for its full activation. Functionally, serine/threonine-protein kinase which is involved in the regulation of a wide variety of ion channels, membrane transporters, cell growth, survival and proliferation. Up-regulates Na(+) channels: SCNN1A/ENAC, K(+) channels: KCNA3/Kv1.3, KCNE1 and KCNQ1, amino acid transporter: SLC6A19, glutamate transporter: SLC1A6/EAAT4, glutamate receptors: GRIA1/GLUR1 and GRIK2/GLUR6, Na(+)/H(+) exchanger: SLC9A3/NHE3, and the Na(+)/K(+) ATPase. The chain is Serine/threonine-protein kinase Sgk2 (Sgk2) from Rattus norvegicus (Rat).